The primary structure comprises 464 residues: MMARRDPTSWAKRLVRAQTLQKQRRAPVGPRAPPPDEEDPRLKCKNCGAFGHTARSTRCPMKCWKAALVPATLGKKEGKENLKPWKPRGEANPGPLNKDKGEKEERPRQQDPQRKALLHMFSGKPPEKPLPNGKGSTEPSDYLRVASGPMPVHTTSKRPRLDPVLADRSATEMSGRGSVLASLSPLRKASLSSSSSLGPKERQTGAAADMPQPAVRHQGREPLLVVKPTHSRPEGGCREVPQAASKTHGLLQAARPQAQDKRPAVTSQPCPPAATHSLGLGSNLSFGPGAKRPAQAPIQACLNFPKKPRLGPFQIPESAIQGGELGAPENLQPPPAATELGPSTSPQMGRRTPAQVPSVDRQPPHSRPCLPTAQACTMSHHPAASHDGAQPLRVLFRRLENGRWSSSLLAAPSFHSPEKPGAFLAQSPHVSEKSEAPCVRVPPSVLYEDLQVSSSSEDSDSDLE.

Disordered regions lie at residues 1–42, 69–389, and 411–437; these read MMAR…DPRL, VPAT…HDGA, and APSF…SEAP. Basic and acidic residues-rich tracts occupy residues 74 to 89 and 97 to 114; these read GKKE…KPRG and NKDK…DPQR. Positions 180 to 197 are enriched in low complexity; sequence LASLSPLRKASLSSSSSL.

This sequence belongs to the FAM90 family.

The polypeptide is Protein FAM90A13 (Homo sapiens (Human)).